Consider the following 639-residue polypeptide: Polyvinylalcohol dehydrogenase (639 aa).

The N-terminal stretch at 1-33 (MQQNIERNQVSMTTSRFVWGAVMALVALGSASA) is a signal peptide. The region spanning 36-152 (LNLPDGAALY…TPDQWNGWGA (117 aa)) is the Cytochrome c domain. Residues Cys49, Cys52, and His53 each coordinate heme.

Belongs to the bacterial PQQ dehydrogenase family. In terms of assembly, monomer. Pyrroloquinoline quinone is required as a cofactor.

The protein resides in the cytoplasm. It catalyses the reaction a polyvinyl alcohol + 2n Fe(III)-[cytochrome c] = an oxidized polyvinyl alcohol + 2n Fe(II)-[cytochrome c] + 2n H(+). Catalyzes the oxidation of polyvinyl alcohol (PVA) in the polyvinyl alcohol degradation pathway. This Pseudomonas sp protein is Polyvinylalcohol dehydrogenase (pvaA).